Consider the following 312-residue polypeptide: Olfactory receptor 1493 (312 aa).

The Extracellular segment spans residues 1–23 (MNNKTVITHFLLLGLPIPPEHQQ). Residue asparagine 3 is glycosylated (N-linked (GlcNAc...) asparagine). Residues 24–48 (LFFALFLIMYLTTFLGNLLIVVLVQ) traverse the membrane as a helical segment. The Cytoplasmic segment spans residues 49-55 (LDSHLHT). The chain crosses the membrane as a helical span at residues 56 to 77 (PMYLFLSNLSFSDLCFSSVTML). The Extracellular segment spans residues 78 to 98 (KLLQNIQSQVPSISYAGCLTQ). The cysteines at positions 95 and 187 are disulfide-linked. The chain crosses the membrane as a helical span at residues 99–118 (IFFFLLFGYLGNFLLVAMAY). Residues 119–137 (DRYVAICFPLHYTNIMSHK) lie on the Cytoplasmic side of the membrane. Residues 138–156 (LCTCLLLVFWIMTSSHAMM) traverse the membrane as a helical segment. Residues 157–194 (HTLLAARLSFCENNVLLNFFCDLFVLLKLACSDTYVNE) lie on the Extracellular side of the membrane. A helical transmembrane segment spans residues 195–217 (LMIHIMGVIIIVIPFVLIVISYA). Over 218 to 234 (KIISSILKVPSTQSIHK) the chain is Cytoplasmic. Residues 235–258 (VFSTCGSHLSVVSLFYGTIIGLYL) form a helical membrane-spanning segment. At 259–270 (CPSGDNFSLKGS) the chain is on the extracellular side. The helical transmembrane segment at 271 to 290 (AMAMMYTVVTPMLNPFIYSL) threads the bilayer. Over 291-312 (RNRDMKQALIRVTCSKKISLPW) the chain is Cytoplasmic.

The protein belongs to the G-protein coupled receptor 1 family. Olfactory epithelium.

It localises to the cell membrane. Functionally, odorant receptor. The polypeptide is Olfactory receptor 1493 (Olr1493) (Rattus norvegicus (Rat)).